The following is a 181-amino-acid chain: MEARRHVALKESVRSIPDYPKPGIIFRDITTLLSDPRAFRRAVDALVHPYAGGQIHQVAGIEARGFILGGAIAHQLSCGFVPIRKKGKLPHKTVSMAYALEYGTDEIEIHVDAVRPGDKVLLVDDLIATGGTAIAAVNLLQKIGAEIVAACFVIDLPEIGGAQRLRDLGVEVRTLMQFEGH.

The protein belongs to the purine/pyrimidine phosphoribosyltransferase family. Homodimer.

It is found in the cytoplasm. It carries out the reaction AMP + diphosphate = 5-phospho-alpha-D-ribose 1-diphosphate + adenine. It participates in purine metabolism; AMP biosynthesis via salvage pathway; AMP from adenine: step 1/1. Catalyzes a salvage reaction resulting in the formation of AMP, that is energically less costly than de novo synthesis. The chain is Adenine phosphoribosyltransferase from Methylobacterium radiotolerans (strain ATCC 27329 / DSM 1819 / JCM 2831 / NBRC 15690 / NCIMB 10815 / 0-1).